The sequence spans 101 residues: Cyanovirin-N (101 aa).

Disulfide bonds link C8/C22 and C58/C73.

The protein belongs to the cyanovirin-N family. In solution exists as a metastable domain-swapped homodimer which very slowly converts into a more stable monomeric form at room temperature. Under physiological conditions it is unlikely that the dimeric species exists and indeed the monomer is more active against HIV. Interacts with HIV-1 gp120. Cleavage, or reduction and alkylation of the disulfide bonds results in the loss of anti-HIV activity.

In terms of biological role, mannose-binding lectin. The sequence is that of Cyanovirin-N from Nostoc ellipsosporum.